A 456-amino-acid polypeptide reads, in one-letter code: Protein COBRA (456 aa).

A signal peptide spans 1–36 (MESFFSRSTSIVSKLSFLALWIVFLISSSSFTSTEA). N-linked (GlcNAc...) asparagine glycans are attached at residues asparagine 45, asparagine 170, asparagine 178, asparagine 217, asparagine 242, asparagine 258, asparagine 328, asparagine 343, and asparagine 362. Asparagine 431 is lipidated: GPI-anchor amidated asparagine. Positions 432-456 (GGSRSQFSFVAAVLLPLLVFFFFSA) are cleaved as a propeptide — removed in mature form.

This sequence belongs to the COBRA family. As to expression, expressed in roots, stems, leaves, flowers and siliques. Up-regulated in the root zone of rapid longitudinal expansion.

It is found in the lateral cell membrane. Its function is as follows. Involved in determining the orientation of cell expansion, probably by playing an important role in cellulose deposition. May act by recruiting cellulose synthesizing complexes to discrete positions on the cell surface. This Arabidopsis thaliana (Mouse-ear cress) protein is Protein COBRA (COB).